We begin with the raw amino-acid sequence, 681 residues long: Oligopeptidase A (681 aa).

Residue histidine 470 participates in Zn(2+) binding. Residue glutamate 471 is part of the active site. 2 residues coordinate Zn(2+): histidine 474 and histidine 477.

The protein belongs to the peptidase M3 family. Zn(2+) serves as cofactor.

The enzyme catalyses Hydrolysis of oligopeptides, with broad specificity. Gly or Ala commonly occur as P1 or P1' residues, but more distant residues are also important, as is shown by the fact that Z-Gly-Pro-Gly-|-Gly-Pro-Ala is cleaved, but not Z-(Gly)(5).. May play a specific role in the degradation of signal peptides after they are released from precursor forms of secreted proteins. Can cleave N-acetyl-L-Ala(4). In Haemophilus influenzae (strain ATCC 51907 / DSM 11121 / KW20 / Rd), this protein is Oligopeptidase A (prlC).